The following is a 204-amino-acid chain: Large ribosomal subunit protein uL4 (204 aa).

The segment at Q49–R72 is disordered.

Belongs to the universal ribosomal protein uL4 family. As to quaternary structure, part of the 50S ribosomal subunit.

In terms of biological role, one of the primary rRNA binding proteins, this protein initially binds near the 5'-end of the 23S rRNA. It is important during the early stages of 50S assembly. It makes multiple contacts with different domains of the 23S rRNA in the assembled 50S subunit and ribosome. Its function is as follows. Forms part of the polypeptide exit tunnel. The chain is Large ribosomal subunit protein uL4 from Saccharophagus degradans (strain 2-40 / ATCC 43961 / DSM 17024).